A 309-amino-acid chain; its full sequence is Probable manganese-dependent inorganic pyrophosphatase (309 aa).

6 residues coordinate Mn(2+): His9, Asp13, Asp15, Asp75, His97, and Asp149.

It belongs to the PPase class C family. The cofactor is Mn(2+).

It localises to the cytoplasm. The catalysed reaction is diphosphate + H2O = 2 phosphate + H(+). The sequence is that of Probable manganese-dependent inorganic pyrophosphatase from Staphylococcus epidermidis (strain ATCC 35984 / DSM 28319 / BCRC 17069 / CCUG 31568 / BM 3577 / RP62A).